Reading from the N-terminus, the 68-residue chain is Venom-like beta-defensin (68 aa).

The N-terminal stretch at 1-24 (MRLLILFLAVVTLLSLAGPGSAEV) is a signal peptide. Intrachain disulfides connect C33-C60, C40-C54, and C47-C61.

In terms of tissue distribution, highly expressed in intestine, liver and spleen and expressed at lower levels in brain, kidney, lung, testis and venom gland.

The protein resides in the secreted. Potent antimicrobial peptide that displays activity against S.aureus and P.aeruginosa. Does not inhibit growth of E.coli. The protein is Venom-like beta-defensin of Ornithorhynchus anatinus (Duckbill platypus).